A 336-amino-acid polypeptide reads, in one-letter code: Cytoplasmic envelopment protein 2 (336 aa).

The tract at residues 67–69 is interaction with host BBLF1; sequence KKK.

Belongs to the herpesviridae cytoplasmic envelopment protein 2 family. As to quaternary structure, homodimer. Interacts with BBLF1. Interacts with the capsid. Interacts with BKRF4 (via C-terminus); this interaction is important for infectious virion production. Interacts with host TYK2; this interaction participates to the inhibition of host type I IFN signaling. Interacts with host STAT1; this interaction leads to STAT1 dephosphorylation and inhibition. Interacts with host STAT2; this interaction leads to STAT2 degradation. Interacts with host CUL1; this interaction might facilitate CUL1 recruitment to STAT2, leading to ubiquitination and degradation of the latter. Interacts with host AGO2; this interaction participates to the host miRNA regulation leading to enhanced SUMOylation.

It is found in the virion tegument. Its subcellular location is the host cytoplasm. It localises to the host nucleus. The protein resides in the host Golgi apparatus. The protein localises to the host trans-Golgi network. In terms of biological role, plays a critical role in cytoplasmic virus egress. Participates in the final step of tegumentation and envelope acquisition within the host cytoplasm by directly interacting with the capsid. Upon virion binding to target cell, a signaling cascade is triggered to disrupt the interaction with the capsid, thereby preparing capsid uncoating. Activates the AP-1 pathway and enhances EBV reactivation and virus release. Inhibits type I IFN-induced TYK2, STAT1 and STAT3 phosphorylation, thereby impairing type I IFN signaling and counteracting the ability of IFN-alpha to suppress the reactivation of EBV. Recruits SHP1 phosphatase to dephosphorylate STAT1. Mediates STAT2 ubiquitination and proteasomal degradation. Also suppresses type II and type III IFN signaling. Contributes to G1/S arrest in the host cell. Acts as an miRNA regulator that interferes with the function of RISC in miRNA-mediated mRNA silencing. As a result, SUMOylation is increased. When encapsulated in the exosomes released by EBV-infected host cells, may facilitate the infection in recipient cells. This chain is Cytoplasmic envelopment protein 2, found in Epstein-Barr virus (strain AG876) (HHV-4).